The chain runs to 171 residues: 3-hydroxydecanoyl-[acyl-carrier-protein] dehydratase (171 aa).

Histidine 71 is a catalytic residue.

The protein belongs to the thioester dehydratase family. FabA subfamily. In terms of assembly, homodimer.

It is found in the cytoplasm. It catalyses the reaction a (3R)-hydroxyacyl-[ACP] = a (2E)-enoyl-[ACP] + H2O. It carries out the reaction (3R)-hydroxydecanoyl-[ACP] = (2E)-decenoyl-[ACP] + H2O. The catalysed reaction is (2E)-decenoyl-[ACP] = (3Z)-decenoyl-[ACP]. It participates in lipid metabolism; fatty acid biosynthesis. Functionally, necessary for the introduction of cis unsaturation into fatty acids. Catalyzes the dehydration of (3R)-3-hydroxydecanoyl-ACP to E-(2)-decenoyl-ACP and then its isomerization to Z-(3)-decenoyl-ACP. Can catalyze the dehydratase reaction for beta-hydroxyacyl-ACPs with saturated chain lengths up to 16:0, being most active on intermediate chain length. This Sinorhizobium fredii (strain NBRC 101917 / NGR234) protein is 3-hydroxydecanoyl-[acyl-carrier-protein] dehydratase.